Reading from the N-terminus, the 255-residue chain is Transmembrane protein 81 (255 aa).

The first 30 residues, 1–30, serve as a signal peptide directing secretion; it reads MKVLATSFVLGSLGLAFYLPLVVTTPKTLA. At 31–226 the chain is on the extracellular side; that stretch reads IPEKLQEAVG…HPKWKKKVAS (196 aa). A glycan (N-linked (GlcNAc...) asparagine) is linked at asparagine 45. Residues 83–171 enclose the Ig-like domain; sequence TNWICGMLHF…VQLVKNLRLV (89 aa). A disulfide bridge connects residues cysteine 104 and cysteine 160. A helical membrane pass occupies residues 227-247; sequence ALGIGIAIGVVGGVLVRIVLC. Topologically, residues 248 to 255 are cytoplasmic; the sequence is ALRGGLQQ.

Forms a complex with IZUMO1 and SPACA6 on spermatocyte cell membrane required for fertilization. In terms of tissue distribution, highly expressed in sperm (at protein level).

It localises to the cell membrane. Functionally, essential fertilization factor required for male fertility. Part of a conserved trimeric sperm complex with the essential fertilization factors IZUMO1 and SPACA6 which bridges sperm and oocyte membranes during fertilization by binding to IZUMO1R/JUNO on the oocyte. In Homo sapiens (Human), this protein is Transmembrane protein 81.